Here is a 380-residue protein sequence, read N- to C-terminus: Cytochrome b (380 aa).

Helical transmembrane passes span 34 to 54, 78 to 99, 114 to 134, and 179 to 199; these read FGSLLPVCLIAQIATGLFLAM, WLLRNLHANGASFFFICIYFHI, WNIGVILLLLVMATAFVGYVL, and FFTFDFILLFIIAATSLIHLL. The heme b site is built by histidine 84 and histidine 98. Histidine 197 serves as a coordination point for heme b. Histidine 202 is a binding site for a ubiquinone. The next 4 membrane-spanning stretches (helical) occupy residues 227 to 247, 289 to 309, 321 to 341, and 348 to 368; these read FKDLLGFIILLGALAILSTFA, LGGVLALLLSIMVLFLMPITH, TAKAFFWALIANTIILTWIGG, and FISIGQIASGLYFLIFVLIIP.

This sequence belongs to the cytochrome b family. In terms of assembly, the cytochrome bc1 complex contains 3 respiratory subunits (MT-CYB, CYC1 and UQCRFS1), 2 core proteins (UQCRC1 and UQCRC2) and probably 6 low-molecular weight proteins. The cofactor is heme b.

Its subcellular location is the mitochondrion inner membrane. In terms of biological role, component of the ubiquinol-cytochrome c reductase complex (complex III or cytochrome b-c1 complex) that is part of the mitochondrial respiratory chain. The b-c1 complex mediates electron transfer from ubiquinol to cytochrome c. Contributes to the generation of a proton gradient across the mitochondrial membrane that is then used for ATP synthesis. This Glandirana rugosa (Japanese wrinkled frog) protein is Cytochrome b (mt-cyb).